The following is a 1009-amino-acid chain: Protein naked cuticle (1009 aa).

Composition is skewed to polar residues over residues 68-83 and 121-130; these read IITT…ASNK and LPQDMSSSGS. Residues 68–166 form a disordered region; the sequence is IITTPPGNAS…QQQTAAAATG (99 aa). A compositionally biased stretch (low complexity) spans 152 to 166; the sequence is QQQQQQQQTAAAATG. Positions 206 to 282 are interaction with dsh; that stretch reads EFTCDVSVEG…TVSPEGKSKS (77 aa). Positions 217 to 253 constitute an EF-hand domain; sequence KSSQPLQFSFTFYDLDGHHGKITKDDIVGIVYTIYES. Disordered regions lie at residues 328-433, 456-479, and 515-580; these read MSKQ…QQQL, AGNE…RQQD, and GNDS…QQQR. Over residues 349-359 the composition is skewed to basic residues; sequence RRQHRYRPRKL. Residues 370–387 are compositionally biased toward basic and acidic residues; it reads NSEKEKERERERERESHA. The segment covering 403-414 has biased composition (basic residues); it reads KSHHHHHHHGRY. Residues 515 to 525 show a composition bias toward polar residues; that stretch reads GNDSGNWQNRH. Low complexity-rich tracts occupy residues 526-535 and 570-580; these read LQQSLQQQPQ and HQQLQQQQQQR. The segment at 584-613 is required for nuclear localization and inhibition of Wnt signaling; the sequence is ECWKSALNRNDLISIIRESMEKNRLCFQLN. Disordered regions lie at residues 619-662, 773-799, 835-899, and 955-982; these read NVSP…SPLS, SAAH…HNQK, LQQK…SAGS, and TESG…LDTS. Low complexity-rich tracts occupy residues 624–638 and 653–662; these read RQPA…QRQR and SPAAPQSPLS. The span at 843–857 shows a compositional bias: basic residues; that stretch reads RRHRHKQQQQQHHHQ. Over residues 858–875 the composition is skewed to low complexity; it reads QQQQQQQQQNQQQQQQQQ. Over residues 968–979 the composition is skewed to acidic residues; sequence EADEGQEQEVEL.

The protein belongs to the NKD family. As to quaternary structure, interacts with dsh.

It is found in the cell membrane. It localises to the cytoplasm. The protein localises to the nucleus. In terms of biological role, cell autonomous antagonist of the canonical Wnt signaling pathway. May activate a second Wnt signaling pathway that controls planar cell polarity. Required for neuroblast specification. The protein is Protein naked cuticle of Drosophila pseudoobscura pseudoobscura (Fruit fly).